The chain runs to 206 residues: Sclerostin domain-containing protein 1 (206 aa).

Residues 1–22 form the signal peptide; it reads MLLSAIHFYGLLLACTFTRSYS. The tract at residues 40–68 is disordered; sequence APASPSSNSTLNQARNGGRHYAGTGSDRN. A compositionally biased stretch (polar residues) spans 43 to 54; that stretch reads SPSSNSTLNQAR. N-linked (GlcNAc...) asparagine glycosylation is present at Asn47. Cystine bridges form between Cys75–Cys133, Cys89–Cys147, Cys100–Cys163, and Cys104–Cys165. One can recognise a CTCK domain in the interval 75–170; that stretch reads CRELRSTKYI…TACKCKRYTR (96 aa). The N-linked (GlcNAc...) asparagine glycan is linked to Asn173. The disordered stretch occupies residues 176–206; that stretch reads SHNFEGTSQAKPVQHHKERKRASKSSKHSTS. Over residues 188–206 the composition is skewed to basic residues; the sequence is VQHHKERKRASKSSKHSTS.

It belongs to the sclerostin family. Interacts with LRP6.

It is found in the secreted. Functionally, can activate or inhibit Wnt signaling in a context-dependent manner. Activates the canonical Wnt pathway whereby acts through Disheveled proteins and beta-catenin. Antagonises Wnt signaling through the canonical pathways presumably by blocking accessibility of certain WNTs to their receptors. Induces posterior neural markers via components of the canonical Wnt pathway. The polypeptide is Sclerostin domain-containing protein 1 (SOSTDC1) (Gallus gallus (Chicken)).